We begin with the raw amino-acid sequence, 324 residues long: Kelch domain-containing protein PF0436 (324 aa).

Kelch repeat units follow at residues 112 to 160 (EVLL…LWDG), 254 to 301 (GIYI…WDGR), and 303 to 323 (IYIV…FTPK).

The chain is Kelch domain-containing protein PF0436 from Pyrococcus furiosus (strain ATCC 43587 / DSM 3638 / JCM 8422 / Vc1).